An 89-amino-acid polypeptide reads, in one-letter code: Small ribosomal subunit protein uS15 (89 aa).

The protein belongs to the universal ribosomal protein uS15 family. As to quaternary structure, part of the 30S ribosomal subunit. Forms a bridge to the 50S subunit in the 70S ribosome, contacting the 23S rRNA.

Its function is as follows. One of the primary rRNA binding proteins, it binds directly to 16S rRNA where it helps nucleate assembly of the platform of the 30S subunit by binding and bridging several RNA helices of the 16S rRNA. Functionally, forms an intersubunit bridge (bridge B4) with the 23S rRNA of the 50S subunit in the ribosome. In Vibrio cholerae serotype O1 (strain ATCC 39541 / Classical Ogawa 395 / O395), this protein is Small ribosomal subunit protein uS15.